Consider the following 341-residue polypeptide: Dihydroorotate dehydrogenase (quinone) (341 aa).

Residues 61–65 and threonine 85 each bind FMN; that span reads AGLDK. Lysine 65 serves as a coordination point for substrate. 110 to 114 provides a ligand contact to substrate; it reads NRMGF. Positions 138 and 171 each coordinate FMN. Asparagine 171 contacts substrate. Serine 174 (nucleophile) is an active-site residue. Residue asparagine 176 participates in substrate binding. Residues lysine 216 and threonine 244 each coordinate FMN. Residue 245–246 coordinates substrate; sequence NT. FMN-binding positions include glycine 267, glycine 296, and 317–318; that span reads YS.

Belongs to the dihydroorotate dehydrogenase family. Type 2 subfamily. In terms of assembly, monomer. The cofactor is FMN.

The protein localises to the cell membrane. It catalyses the reaction (S)-dihydroorotate + a quinone = orotate + a quinol. Its pathway is pyrimidine metabolism; UMP biosynthesis via de novo pathway; orotate from (S)-dihydroorotate (quinone route): step 1/1. Functionally, catalyzes the conversion of dihydroorotate to orotate with quinone as electron acceptor. In Pseudomonas putida (strain W619), this protein is Dihydroorotate dehydrogenase (quinone).